Reading from the N-terminus, the 491-residue chain is Ketol-acid reductoisomerase (NADP(+)) (491 aa).

The KARI N-terminal Rossmann domain occupies 15–208 (AQLGKCRFMG…GGHRAGVLES (194 aa)). Residues 45-48 (CGAQ), R68, R76, S78, and 108-110 (DKQ) each bind NADP(+). H132 is an active-site residue. G158 serves as a coordination point for NADP(+). KARI C-terminal knotted domains lie at 209–344 (SFVA…TAPQ) and 345–484 (FEGK…MTDM). Positions 217, 221, 389, and 393 each coordinate Mg(2+). S414 provides a ligand contact to substrate.

The protein belongs to the ketol-acid reductoisomerase family. The cofactor is Mg(2+).

The catalysed reaction is (2R)-2,3-dihydroxy-3-methylbutanoate + NADP(+) = (2S)-2-acetolactate + NADPH + H(+). It carries out the reaction (2R,3R)-2,3-dihydroxy-3-methylpentanoate + NADP(+) = (S)-2-ethyl-2-hydroxy-3-oxobutanoate + NADPH + H(+). The protein operates within amino-acid biosynthesis; L-isoleucine biosynthesis; L-isoleucine from 2-oxobutanoate: step 2/4. Its pathway is amino-acid biosynthesis; L-valine biosynthesis; L-valine from pyruvate: step 2/4. Functionally, involved in the biosynthesis of branched-chain amino acids (BCAA). Catalyzes an alkyl-migration followed by a ketol-acid reduction of (S)-2-acetolactate (S2AL) to yield (R)-2,3-dihydroxy-isovalerate. In the isomerase reaction, S2AL is rearranged via a Mg-dependent methyl migration to produce 3-hydroxy-3-methyl-2-ketobutyrate (HMKB). In the reductase reaction, this 2-ketoacid undergoes a metal-dependent reduction by NADPH to yield (R)-2,3-dihydroxy-isovalerate. The protein is Ketol-acid reductoisomerase (NADP(+)) of Salmonella dublin (strain CT_02021853).